Here is a 430-residue protein sequence, read N- to C-terminus: Glutamate-1-semialdehyde 2,1-aminomutase (430 aa).

Position 267 is an N6-(pyridoxal phosphate)lysine (Lys267).

This sequence belongs to the class-III pyridoxal-phosphate-dependent aminotransferase family. HemL subfamily. As to quaternary structure, homodimer. The cofactor is pyridoxal 5'-phosphate.

It localises to the cytoplasm. The enzyme catalyses (S)-4-amino-5-oxopentanoate = 5-aminolevulinate. Its pathway is porphyrin-containing compound metabolism; protoporphyrin-IX biosynthesis; 5-aminolevulinate from L-glutamyl-tRNA(Glu): step 2/2. This Natranaerobius thermophilus (strain ATCC BAA-1301 / DSM 18059 / JW/NM-WN-LF) protein is Glutamate-1-semialdehyde 2,1-aminomutase.